A 185-amino-acid polypeptide reads, in one-letter code: Peptidyl-tRNA hydrolase (185 aa).

Tyrosine 14 is a binding site for tRNA. Catalysis depends on histidine 19, which acts as the Proton acceptor. TRNA is bound by residues tyrosine 65, asparagine 67, and asparagine 113.

It belongs to the PTH family. In terms of assembly, monomer.

It localises to the cytoplasm. It catalyses the reaction an N-acyl-L-alpha-aminoacyl-tRNA + H2O = an N-acyl-L-amino acid + a tRNA + H(+). In terms of biological role, hydrolyzes ribosome-free peptidyl-tRNAs (with 1 or more amino acids incorporated), which drop off the ribosome during protein synthesis, or as a result of ribosome stalling. Catalyzes the release of premature peptidyl moieties from peptidyl-tRNA molecules trapped in stalled 50S ribosomal subunits, and thus maintains levels of free tRNAs and 50S ribosomes. The protein is Peptidyl-tRNA hydrolase of Rickettsia bellii (strain RML369-C).